Reading from the N-terminus, the 207-residue chain is Histidine biosynthesis bifunctional protein HisIE (207 aa).

The segment at 1–115 (MLSKKENLLK…FFLKENTLNF (115 aa)) is phosphoribosyl-AMP cyclohydrolase. Positions 116 to 207 (LSKLEDLIED…NLKKRKTEKL (92 aa)) are phosphoribosyl-ATP pyrophosphohydrolase.

In the N-terminal section; belongs to the PRA-CH family. This sequence in the C-terminal section; belongs to the PRA-PH family.

The protein resides in the cytoplasm. The catalysed reaction is 1-(5-phospho-beta-D-ribosyl)-ATP + H2O = 1-(5-phospho-beta-D-ribosyl)-5'-AMP + diphosphate + H(+). The enzyme catalyses 1-(5-phospho-beta-D-ribosyl)-5'-AMP + H2O = 1-(5-phospho-beta-D-ribosyl)-5-[(5-phospho-beta-D-ribosylamino)methylideneamino]imidazole-4-carboxamide. Its pathway is amino-acid biosynthesis; L-histidine biosynthesis; L-histidine from 5-phospho-alpha-D-ribose 1-diphosphate: step 2/9. It participates in amino-acid biosynthesis; L-histidine biosynthesis; L-histidine from 5-phospho-alpha-D-ribose 1-diphosphate: step 3/9. This chain is Histidine biosynthesis bifunctional protein HisIE (hisI), found in Buchnera aphidicola subsp. Schizaphis graminum (strain Sg).